The chain runs to 494 residues: Membrane-bound lytic murein transglycosylase F 1 (494 aa).

Residues 1–24 form the signal peptide; sequence MRIMAVRLVAGAITLALMAYAWLA. Residues 25–270 form a non-LT domain region; that stretch reads WERARDPEPI…TLLEEHFGHL (246 aa). The tract at residues 271 to 494 is LT domain; the sequence is GRFDYVGFRA…APLPADPPAD (224 aa). Glu-317 is an active-site residue. The tract at residues 464 to 494 is disordered; the sequence is QVPAGEALGEPPLPTPPAPPGAPLPADPPAD. Pro residues predominate over residues 474–494; it reads PPLPTPPAPPGAPLPADPPAD.

The protein in the N-terminal section; belongs to the bacterial solute-binding protein 3 family. This sequence in the C-terminal section; belongs to the transglycosylase Slt family.

It localises to the cell outer membrane. The catalysed reaction is Exolytic cleavage of the (1-&gt;4)-beta-glycosidic linkage between N-acetylmuramic acid (MurNAc) and N-acetylglucosamine (GlcNAc) residues in peptidoglycan, from either the reducing or the non-reducing ends of the peptidoglycan chains, with concomitant formation of a 1,6-anhydrobond in the MurNAc residue.. In terms of biological role, murein-degrading enzyme that degrades murein glycan strands and insoluble, high-molecular weight murein sacculi, with the concomitant formation of a 1,6-anhydromuramoyl product. Lytic transglycosylases (LTs) play an integral role in the metabolism of the peptidoglycan (PG) sacculus. Their lytic action creates space within the PG sacculus to allow for its expansion as well as for the insertion of various structures such as secretion systems and flagella. This is Membrane-bound lytic murein transglycosylase F 1 from Alkalilimnicola ehrlichii (strain ATCC BAA-1101 / DSM 17681 / MLHE-1).